The primary structure comprises 91 residues: Probable Thioredoxin (91 aa).

Residues 1-91 (MVMMKLFTSP…LKGGEEYGAS (91 aa)) enclose the Glutaredoxin domain. A disulfide bridge links C12 with C15.

It belongs to the glutaredoxin family.

It localises to the cytoplasm. In terms of biological role, acts to maintain redox homeostasis; functions as a protein disulfide reductase. The chain is Probable Thioredoxin from Archaeoglobus fulgidus (strain ATCC 49558 / DSM 4304 / JCM 9628 / NBRC 100126 / VC-16).